Consider the following 584-residue polypeptide: MARPSPLCLLLLLTLLTPIVPSNSLLTEPPFRWRFYLHETWTQGNRLSTVTLATVDCQPHGCQAQVTFNFTSFKSVLRGWSNPTICFVYDQTHSNCRDYWVDTNGGCPYAYCRMHVTQLHTAKKLQHTYRLTSDGRTTYFLTIPDPWDSRWVSGVTGRLYRWPTDSYPVGKLRIFLTYIRVIPQVLSNLKDQADNIKHQEEVINTLVQSHPKADMVTYDDKAEAGPFSWITLVRHGARLVNMAGLVNLSHCFLCTALSQPPLVAVPLPQAFNTSGNHTAHPSGVFSEQVPLFRDPLQPQFPFCYTTPNSSWCNQTYSGSLSNLSAPAGGYFWCNFTLTKHLNISSNNTLSRNLCLPISLVPRLTLYSEAELSSLVNPPMRQKRAVFPPLVIGVSLTSSLVASGLGTGAIVHFISSSQDLSIKLQMAIEASAESLASLQRQITSVAKVAMQNRRALDLLTADKGGTCMFLGEECCYYINESGLVETSLLTLDKIRDGLHRPSSTPNYGGGWWQSPLTTWIIPFISPILIICLLLLIAPCVLKFIKNRISEVSRVTVNQMLLHPYSRLPTSEDHYDDALTQQEAAR.

Positions 1 to 22 (MARPSPLCLLLLLTLLTPIVPS) are cleaved as a signal peptide. Residues 23 to 518 (NSLLTEPPFR…GWWQSPLTTW (496 aa)) lie on the Extracellular side of the membrane. Residues asparagine 69 and asparagine 247 are each glycosylated (N-linked (GlcNAc...) asparagine). A CXXC motif is present at residues 251–254 (CFLC). N-linked (GlcNAc...) asparagine glycosylation is found at asparagine 272, asparagine 276, asparagine 308, asparagine 313, asparagine 322, asparagine 334, asparagine 342, and asparagine 346. The tract at residues 384–404 (AVFPPLVIGVSLTSSLVASGL) is fusion peptide. A CKS-17 motif is present at residues 449 to 465 (MQNRRALDLLTADKGGT). The cysteines at positions 466 and 473 are disulfide-linked. Residues 466-474 (CMFLGEECC) carry the CX6CC motif. N-linked (GlcNAc...) asparagine glycosylation is present at asparagine 478. Residues 519 to 539 (IIPFISPILIICLLLLIAPCV) traverse the membrane as a helical segment. The Cytoplasmic portion of the chain corresponds to 540-584 (LKFIKNRISEVSRVTVNQMLLHPYSRLPTSEDHYDDALTQQEAAR).

The protein belongs to the gamma type-C retroviral envelope protein family. HERV class-I F(c)1 env subfamily. The surface (SU) and transmembrane (TM) proteins form a heterodimer. SU and TM are attached by noncovalent interactions or by a labile interchain disulfide bond. Post-translationally, specific enzymatic cleavages in vivo yield the mature SU and TM proteins. The CXXC motif is highly conserved across a broad range of retroviral envelope proteins. It is thought to participate in the formation of a labile disulfide bond possibly with the CX6CC motif present in the transmembrane protein. In terms of tissue distribution, low expression in skin, testis and trachea.

The protein localises to the virion. Its subcellular location is the cell membrane. In terms of biological role, retroviral envelope proteins mediate receptor recognition and membrane fusion during early infection. Endogenous envelope proteins may have kept, lost or modified their original function during evolution. This endogenous envelope protein has lost its original fusogenic properties. Its function is as follows. SU mediates receptor recognition. TM anchors the envelope heterodimer to the viral membrane through one transmembrane domain. The other hydrophobic domain, called fusion peptide, mediates fusion of the viral membrane with the target cell membrane. The polypeptide is Endogenous retrovirus group FC1 Env polyprotein (ERVFC1) (Homo sapiens (Human)).